The following is a 794-amino-acid chain: MALHNPQYIFGDFSPDEFNQFFVTPRSSVELPPYSGTQCGIQAEEELLDGQEHQRIEFGVDEVIEPSDGLQRAPSYSISSTLNPQAPEFILGCPTSKKTPDDIEKDETYSSIDQYPASALALESSSNAEAETLENDSGAGGLGQRERKKKKKRPPGYYSYLKDGSEEGASPAALVNGHATSVGTNSEGVEDPEFMVDMLPSVMPRTCDSPQNPMDLISDPVPDSPFPRTLGGDARTAGLPEGCRETDFEQPCLPTDNLLRTAVTQPNAGADTTENLAVANGKILESLGEGTAAANGVELHTDESADLDPAKPESQSPPAESALSVSGAISISQPAKSWASLFHDSKPSSSSPVAYVETKCSPPVPSPLASEKQMEVKEGLVPVSEDPVAIKIAELLETVTLVHKPVSLQPRGLINKGNWCYINATLQALVACPPMYHLMKFIPLYSKVQRPCTSTPMIDSFVRLMNEFTNMPVPPKPRQALGDKIVRDIRPGAAFEPTYIYRLLTVIKSSLSEKGRQEDAEEYLGFILNGLHEEMLSLKKLLSPTHEKHSVSNGPGSHLIEDEELEDTGEGSEDEWEQVGPKNKTSVTRQADFVQTPITGIFGGHIRSVVYQQSSKESATLQPFFTLQLDIQSDKIRTVQDALESLVARESVQGYTTKTKQEVEVSRRVTLEKLPPVLVLHLKRFVYEKTGGCQKLVKNIEYPVDLEISRELLSPGVKNKNFKCHRTYRLFAVVYHHGNSATGGHYTTDVFQIGLNGWLRIDDQTVKVINQYQVVRPSADRTAYLLYYRRVDLL.

Alanine 2 is subject to N-acetylalanine. Positions 2–99 (ALHNPQYIFG…ILGCPTSKKT (98 aa)) are interaction with p53/TP53. The G3BP1-binding stretch occupies residues 6–21 (PQYIFGDFSPDEFNQF). Phosphothreonine occurs at positions 24 and 99. The tract at residues 123-164 (ESSSNAEAETLENDSGAGGLGQRERKKKKKRPPGYYSYLKDG) is disordered. A phosphoserine mark is found at serine 209, serine 224, and serine 316. A disordered region spans residues 303-326 (ESADLDPAKPESQSPPAESALSVS). A compositionally biased stretch (polar residues) spans 313-326 (ESQSPPAESALSVS). Phosphoserine; by ATM is present on serine 332. Serine 361 and serine 366 each carry phosphoserine. Residues 411–791 (RGLINKGNWC…TAYLLYYRRV (381 aa)) form the USP domain. Cysteine 420 functions as the Nucleophile in the catalytic mechanism. Serine 543 is subject to Phosphoserine. Residues 546–588 (HEKHSVSNGPGSHLIEDEELEDTGEGSEDEWEQVGPKNKTSVT) form a disordered region. Positions 561–577 (EDEELEDTGEGSEDEWE) are enriched in acidic residues. Threonine 568 carries the post-translational modification Phosphothreonine. Position 572 is a phosphoserine (serine 572). Histidine 745 (proton acceptor) is an active-site residue.

Belongs to the peptidase C19 family. USP10 subfamily. Found in a deubiquitination complex with TANK, USP10 and ZC3H12A; this complex inhibits genotoxic stress- or interleukin-1-beta (IL1B)-mediated NF-kappa-B activation by promoting IKBKG or TRAF6 deubiquitination. Interacts with IKBKG; this interaction increases in response to DNA damage. Interacts with TANK; this interaction increases in response to DNA damage. Interacts with TRAF6; this interaction increases in response to DNA damage. Interacts with ZC3H12A; this interaction increases in response to DNA damage. Interacts with G3BP1 (via NTF2 domain) and G3BP2 (via NTF2 domain); inhibiting stress granule formation. Phosphorylated by ATM following DNA damage, leading to stabilization and translocation it to the nucleus. Post-translationally, ubiquitinated. Deubiquitinated by USP13.

It is found in the cytoplasm. Its subcellular location is the nucleus. It localises to the early endosome. The enzyme catalyses Thiol-dependent hydrolysis of ester, thioester, amide, peptide and isopeptide bonds formed by the C-terminal Gly of ubiquitin (a 76-residue protein attached to proteins as an intracellular targeting signal).. Its activity is regulated as follows. Specifically inhibited by spautin-1 (specific and potent autophagy inhibitor-1), a derivative of MBCQ that binds to USP10 and inhibits deubiquitinase activity. Regulated by PIK3C3/VPS34-containing complexes. In terms of biological role, hydrolase that can remove conjugated ubiquitin from target proteins such as p53/TP53, RPS2/us5, RPS3/us3, RPS10/eS10, BECN1, SNX3 and CFTR. Acts as an essential regulator of p53/TP53 stability: in unstressed cells, specifically deubiquitinates p53/TP53 in the cytoplasm, leading to counteract MDM2 action and stabilize p53/TP53. Following DNA damage, translocates to the nucleus and deubiquitinates p53/TP53, leading to regulate the p53/TP53-dependent DNA damage response. Component of a regulatory loop that controls autophagy and p53/TP53 levels: mediates deubiquitination of BECN1, a key regulator of autophagy, leading to stabilize the PIK3C3/VPS34-containing complexes. In turn, PIK3C3/VPS34-containing complexes regulate USP10 stability, suggesting the existence of a regulatory system by which PIK3C3/VPS34-containing complexes regulate p53/TP53 protein levels via USP10 and USP13. Does not deubiquitinate MDM2. Plays a key role in 40S ribosome subunit recycling when a ribosome has stalled during translation: acts both by inhibiting formation of stress granules, which store stalled translation pre-initiation complexes, and mediating deubiquitination of 40S ribosome subunits. Acts as a negative regulator of stress granules formation by lowering G3BP1 and G3BP2 valence, thereby preventing G3BP1 and G3BP2 ability to undergo liquid-liquid phase separation (LLPS) and assembly of stress granules. Promotes 40S ribosome subunit recycling following ribosome dissociation in response to ribosome stalling by mediating deubiquitination of 40S ribosomal proteins RPS2/us5, RPS3/us3 and RPS10/eS10, thereby preventing their degradation by the proteasome. Part of a ribosome quality control that takes place when ribosomes have stalled during translation initiation (iRQC): USP10 acts by removing monoubiquitination of RPS2/us5 and RPS3/us3, promoting 40S ribosomal subunit recycling. Deubiquitinates CFTR in early endosomes, enhancing its endocytic recycling. Involved in a TANK-dependent negative feedback response to attenuate NF-kappa-B activation via deubiquitinating IKBKG or TRAF6 in response to interleukin-1-beta (IL1B) stimulation or upon DNA damage. Deubiquitinates TBX21 leading to its stabilization. Plays a negative role in the RLR signaling pathway upon RNA virus infection by blocking the RIGI-mediated MAVS activation. Mechanistically, removes the unanchored 'Lys-63'-linked polyubiquitin chains of MAVS to inhibit its aggregation, essential for its activation. This chain is Ubiquitin carboxyl-terminal hydrolase 10 (Usp10), found in Rattus norvegicus (Rat).